Consider the following 217-residue polypeptide: Pyrophosphatase PpaX (217 aa).

Residue aspartate 11 is the Nucleophile of the active site.

It belongs to the HAD-like hydrolase superfamily. PpaX family. Mg(2+) serves as cofactor.

The enzyme catalyses diphosphate + H2O = 2 phosphate + H(+). In terms of biological role, hydrolyzes pyrophosphate formed during P-Ser-HPr dephosphorylation by HPrK/P. Might play a role in controlling the intracellular pyrophosphate pool. In Listeria monocytogenes serotype 4a (strain HCC23), this protein is Pyrophosphatase PpaX.